Consider the following 375-residue polypeptide: Putative glutamate--cysteine ligase 2 (375 aa).

The protein belongs to the glutamate--cysteine ligase type 2 family. YbdK subfamily.

It carries out the reaction L-cysteine + L-glutamate + ATP = gamma-L-glutamyl-L-cysteine + ADP + phosphate + H(+). Functionally, ATP-dependent carboxylate-amine ligase which exhibits weak glutamate--cysteine ligase activity. The protein is Putative glutamate--cysteine ligase 2 of Sorangium cellulosum (strain So ce56) (Polyangium cellulosum (strain So ce56)).